The following is a 345-amino-acid chain: N-acetyl-gamma-glutamyl-phosphate reductase (345 aa).

The active site involves Cys-149.

This sequence belongs to the NAGSA dehydrogenase family. Type 1 subfamily.

It is found in the cytoplasm. It carries out the reaction N-acetyl-L-glutamate 5-semialdehyde + phosphate + NADP(+) = N-acetyl-L-glutamyl 5-phosphate + NADPH + H(+). The protein operates within amino-acid biosynthesis; L-arginine biosynthesis; N(2)-acetyl-L-ornithine from L-glutamate: step 3/4. Functionally, catalyzes the NADPH-dependent reduction of N-acetyl-5-glutamyl phosphate to yield N-acetyl-L-glutamate 5-semialdehyde. This is N-acetyl-gamma-glutamyl-phosphate reductase from Bacillus cytotoxicus (strain DSM 22905 / CIP 110041 / 391-98 / NVH 391-98).